Here is a 464-residue protein sequence, read N- to C-terminus: ATP synthase subunit beta (464 aa).

An ATP-binding site is contributed by 153–160 (GGAGVGKT).

The protein belongs to the ATPase alpha/beta chains family. F-type ATPases have 2 components, CF(1) - the catalytic core - and CF(0) - the membrane proton channel. CF(1) has five subunits: alpha(3), beta(3), gamma(1), delta(1), epsilon(1). CF(0) has three main subunits: a(1), b(2) and c(9-12). The alpha and beta chains form an alternating ring which encloses part of the gamma chain. CF(1) is attached to CF(0) by a central stalk formed by the gamma and epsilon chains, while a peripheral stalk is formed by the delta and b chains.

It is found in the cell inner membrane. The enzyme catalyses ATP + H2O + 4 H(+)(in) = ADP + phosphate + 5 H(+)(out). Its function is as follows. Produces ATP from ADP in the presence of a proton gradient across the membrane. The catalytic sites are hosted primarily by the beta subunits. The polypeptide is ATP synthase subunit beta (Burkholderia orbicola (strain MC0-3)).